A 500-amino-acid chain; its full sequence is Kynurenine 3-monooxygenase (500 aa).

This sequence belongs to the aromatic-ring hydroxylase family. KMO subfamily. The cofactor is FAD.

It localises to the mitochondrion outer membrane. It catalyses the reaction L-kynurenine + NADPH + O2 + H(+) = 3-hydroxy-L-kynurenine + NADP(+) + H2O. The protein operates within cofactor biosynthesis; NAD(+) biosynthesis; quinolinate from L-kynurenine: step 1/3. In terms of biological role, catalyzes the hydroxylation of L-kynurenine (L-Kyn) to form 3-hydroxy-L-kynurenine (L-3OHKyn). Required for synthesis of quinolinic acid. The chain is Kynurenine 3-monooxygenase (bna4) from Aspergillus terreus (strain NIH 2624 / FGSC A1156).